The following is a 298-amino-acid chain: Iron-regulated virulence regulatory protein IrgB (298 aa).

The 59-residue stretch at 1–59 folds into the HTH lysR-type domain; that stretch reads MQDLSAVKAFHALCQHKSLTAAAKALEQPKSTLSRRLAQLEEDLGQSLLMRQGNRLTLT. Residues 19–38 constitute a DNA-binding region (H-T-H motif); sequence LTAAAKALEQPKSTLSRRLA.

This sequence belongs to the LysR transcriptional regulatory family.

Transcription activation of the irgA gene. In the presence of sufficient iron, transcription of both irgA and irgB is negatively regulated by a fur-like protein. In low iron conditions, negative regulation of transcription is removed, and production of irgB leads to positive transcriptional activation of irgA. The chain is Iron-regulated virulence regulatory protein IrgB (irgB) from Vibrio cholerae serotype O1 (strain ATCC 39315 / El Tor Inaba N16961).